The primary structure comprises 853 residues: DNA mismatch repair protein MutS (853 aa).

Residue 614-621 coordinates ATP; sequence GPNMGGKS.

The protein belongs to the DNA mismatch repair MutS family.

This protein is involved in the repair of mismatches in DNA. It is possible that it carries out the mismatch recognition step. This protein has a weak ATPase activity. In Escherichia coli (strain 55989 / EAEC), this protein is DNA mismatch repair protein MutS.